Reading from the N-terminus, the 552-residue chain is Ferry endosomal RAB5 effector complex subunit 3 (552 aa).

The disordered stretch occupies residues 383-403; sequence LKESLDSGNQNGGNDDKTKNA.

As to quaternary structure, component of the FERRY complex composed of five subunits, TBCK, PPP1R21, FERRY3, CRYZL1 and GATD1 with a ratio of 1:2:1:2:4, respectively.

Its subcellular location is the cytoplasm. The protein localises to the early endosome. In terms of biological role, component of the FERRY complex (Five-subunit Endosomal Rab5 and RNA/ribosome intermediary). The FERRY complex directly interacts with mRNAs and RAB5A, and functions as a RAB5A effector involved in the localization and the distribution of specific mRNAs most likely by mediating their endosomal transport. The complex recruits mRNAs and ribosomes to early endosomes through direct mRNA-interaction. Plays a role in mast cell degranulation. The protein is Ferry endosomal RAB5 effector complex subunit 3 of Homo sapiens (Human).